Reading from the N-terminus, the 601-residue chain is Sodium-dependent phosphate transport protein 2C (601 aa).

Over 1-75 (MPNSLAGDQV…HQVVSGFLKA (75 aa)) the chain is Cytoplasmic. Phosphoserine is present on serine 4. Residues 76-96 (CGLLGSLYFFICSLDILSSAF) traverse the membrane as a helical segment. The Extracellular segment spans residues 97-110 (QLLGSKMAGDIFKD). The chain crosses the membrane as a helical span at residues 111–131 (NVVLSNPVAGLVIGVVVTVLV). Over 132 to 187 (QSSSTSSSIVVSMVASKSLTVQASVPIIMGVNVGTSITSTLVSMAQSGDRDEFQRA) the chain is Cytoplasmic. Residues 188–208 (FGGSAVHGIFNWLTVLVLLPL) traverse the membrane as a helical segment. Residues 209–324 (ENATAALERL…FAGSELTDLA (116 aa)) lie on the Extracellular side of the membrane. 4 N-linked (GlcNAc...) asparagine glycosylation sites follow: asparagine 210, asparagine 264, asparagine 267, and asparagine 299. Cysteine 275 and cysteine 311 are joined by a disulfide. Residues 325–345 (VGFILLAGSLLVLCVCLVLIV) form a helical membrane-spanning segment. Residues 346–369 (KLLNSVLRGRIAQAVKTVINADFP) are Cytoplasmic-facing. A helical membrane pass occupies residues 370–390 (FPFGWLSGYLAILVGAGLTFL). Residues 391-447 (LQSSSVFTAAIVPLMGVGVINLERAYPLFLGSNIGTTTTALLAALASPADTLLFAVQ) are Extracellular-facing. Residues 448-468 (VALIHFFFNLAGILLWYLVPV) form a helical membrane-spanning segment. Residues 469-487 (LRLPIPLAKRFGDLTAQYR) lie on the Cytoplasmic side of the membrane. Residues 488 to 508 (WVAIVYLLLTFLLLPLAAFGL) traverse the membrane as a helical segment. The Extracellular portion of the chain corresponds to 509-512 (SLAG). Residues 513–533 (GSVLAAVGGPLVGLVLLIILV) form a helical membrane-spanning segment. The Cytoplasmic segment spans residues 534-601 (NVLQRHRPSW…NPQVIASQQL (68 aa)).

The protein belongs to the SLC34A transporter family. In terms of tissue distribution, highly expressed in the kidney. Not found in any of the other tested tissues.

The protein resides in the apical cell membrane. The catalysed reaction is 2 Na(+)(out) + phosphate(out) = 2 Na(+)(in) + phosphate(in). In terms of biological role, involved in actively transporting phosphate into cells via Na(+) cotransport in the renal brush border membrane. The cotransport has a Na(+):Pi stoichiometry of 2:1 and is electroneutral. This chain is Sodium-dependent phosphate transport protein 2C (Slc34a3), found in Rattus norvegicus (Rat).